The primary structure comprises 1758 residues: RanBP2-like and GRIP domain-containing protein 4 (1758 aa).

Ser21 carries the post-translational modification Phosphoserine. 2 TPR repeats span residues 60–93 (PRAH…NPTQ) and 584–617 (QKMG…LKII). Residues 761 to 805 (DPLYKNGSLRNADSEIKHSTPSPTKYSLSPSKSYKYSPKTPPRWA) are disordered. Positions 779-798 (STPSPTKYSLSPSKSYKYSP) are enriched in low complexity. Residues 1037-1173 (HFEPVVQMPE…FEECQQLLLD (137 aa)) form the RanBD1 1 domain. Disordered regions lie at residues 1213–1249 (QTKV…TLEW) and 1295–1332 (SFKS…ERDG). Positions 1236–1245 (IKPNPENTGP) are enriched in polar residues. Over residues 1295 to 1309 (SFKSALSPSKSPAKL) the composition is skewed to low complexity. Positions 1318–1330 (TDEESDVTQEEER) are enriched in acidic residues. One can recognise a RanBD1 2 domain in the interval 1334-1470 (YFEPVVPLPD…FDEAKTAQEK (137 aa)). Polar residues predominate over residues 1583-1594 (SETSSVAQSGSE). Positions 1583-1621 (SETSSVAQSGSESKVEPKKCELSKNSDIEQSSDSKVKNL) are disordered. Residues 1595–1618 (SKVEPKKCELSKNSDIEQSSDSKV) show a composition bias toward basic and acidic residues. In terms of domain architecture, GRIP spans 1703–1753 (QEESAANVEHLKNVLLQFIFLKPGSERERLLPVINTMLQLSPEEKGKLAAV).

This Homo sapiens (Human) protein is RanBP2-like and GRIP domain-containing protein 4 (RGPD4).